A 579-amino-acid polypeptide reads, in one-letter code: Laccase (579 aa).

Residues 1-31 (MTDWSRRRFLQTGAALGIAGTLPQTTTEVSA) constitute a signal peptide (tat-type signal). The Plastocyanin-like 1 domain occupies 82 to 214 (WGFDGSYPGP…AGLLGLYSIT (133 aa)). Cu cation-binding residues include His145, His147, His192, and His194. A disordered region spans residues 372-401 (VSDPSTPPEDASADPTSLSLPTPASYDESD). A Plastocyanin-like 2 domain is found at 423-530 (LNGHVFGDED…NKMMIPFVVE (108 aa)). N-linked (GlcNAc...) asparagine glycosylation is present at Asn449. Residues His455, His458, His460, His512, Cys513, His514, His518, and Met523 each coordinate Cu cation. N-linked (GlcNAc...) asparagine glycosylation occurs at Asn557.

This sequence belongs to the multicopper oxidase family. Cu(2+) is required as a cofactor. In terms of processing, exported by the Tat system. Glycosylated.

It localises to the secreted. The catalysed reaction is 4 hydroquinone + O2 = 4 benzosemiquinone + 2 H2O. Its activity is regulated as follows. Inhibited by 1 mM NaN(3), 10 mM thiourea, 10 mM 1,10-phenanthroline, 0.1 mM DL-dithiothreitol (DTT) and 1 mM L-cysteine. The inhibition by DTT and L-cysteine is likely caused by reduction of the oxidized substrate and not by inhibition of the enzyme. Its function is as follows. Catalyzes the oxidation of a wide variety of organic substrates, including bilirubin, syringaldazine (SGZ), 2,2'-azino-di-(3-ethylbenzothiazoline)-6-sulfonic acid (ABTS) and dimethoxyphenol (DMP). No oxidation of Fe(2+) or guaiacol. This Haloferax volcanii (strain ATCC 29605 / DSM 3757 / JCM 8879 / NBRC 14742 / NCIMB 2012 / VKM B-1768 / DS2) (Halobacterium volcanii) protein is Laccase (lccA).